Consider the following 876-residue polypeptide: Bifunctional uridylyltransferase/uridylyl-removing enzyme (876 aa).

A uridylyltransferase region spans residues 1-332 (MPYQSPITFQ…NNGEEAEAVI (332 aa)). The tract at residues 333–692 (IDDDFQRRGN…LSKKATRGGT (360 aa)) is uridylyl-removing. The HD domain maps to 451-573 (VDEHSIRLLK…VRDEERLEYL (123 aa)). ACT domains lie at 693–777 (EVFI…RIPR) and 800–876 (LMEF…PSAQ).

Belongs to the GlnD family. It depends on Mg(2+) as a cofactor.

It catalyses the reaction [protein-PII]-L-tyrosine + UTP = [protein-PII]-uridylyl-L-tyrosine + diphosphate. The catalysed reaction is [protein-PII]-uridylyl-L-tyrosine + H2O = [protein-PII]-L-tyrosine + UMP + H(+). Uridylyltransferase (UTase) activity is inhibited by glutamine, while glutamine activates uridylyl-removing (UR) activity. Its function is as follows. Modifies, by uridylylation and deuridylylation, the PII regulatory proteins (GlnB and homologs), in response to the nitrogen status of the cell that GlnD senses through the glutamine level. Under low glutamine levels, catalyzes the conversion of the PII proteins and UTP to PII-UMP and PPi, while under higher glutamine levels, GlnD hydrolyzes PII-UMP to PII and UMP (deuridylylation). Thus, controls uridylylation state and activity of the PII proteins, and plays an important role in the regulation of nitrogen assimilation and metabolism. This is Bifunctional uridylyltransferase/uridylyl-removing enzyme from Vibrio cholerae serotype O1 (strain ATCC 39315 / El Tor Inaba N16961).